The chain runs to 252 residues: Hydroxyacylglutathione hydrolase (252 aa).

Zn(2+) is bound by residues H54, H56, D58, H59, H113, D132, and H170.

It belongs to the metallo-beta-lactamase superfamily. Glyoxalase II family. Monomer. Zn(2+) is required as a cofactor.

It catalyses the reaction an S-(2-hydroxyacyl)glutathione + H2O = a 2-hydroxy carboxylate + glutathione + H(+). It functions in the pathway secondary metabolite metabolism; methylglyoxal degradation; (R)-lactate from methylglyoxal: step 2/2. Its function is as follows. Thiolesterase that catalyzes the hydrolysis of S-D-lactoyl-glutathione to form glutathione and D-lactic acid. The sequence is that of Hydroxyacylglutathione hydrolase from Synechococcus sp. (strain JA-2-3B'a(2-13)) (Cyanobacteria bacterium Yellowstone B-Prime).